Consider the following 310-residue polypeptide: Flavin-dependent trigonelline monooxygenase, reductase component (310 aa).

FMN contacts are provided by residues 40 to 43 (TANS), 57 to 63 (SIAKTSS), 90 to 91 (FA), and Arg-97.

This sequence belongs to the non-flavoprotein flavin reductase family. As to quaternary structure, homodimer. The trigonelline monooxygenase is composed of a reductase component TgnA and an oxygenase component TgnB.

The catalysed reaction is a reduced flavin + NAD(+) = an oxidized flavin + NADH + 2 H(+). The enzyme catalyses FADH2 + NAD(+) = FAD + NADH + 2 H(+). It catalyses the reaction FMNH2 + NAD(+) = FMN + NADH + 2 H(+). Its activity is regulated as follows. Maximal reductase activity is achieved only upon trigonelline (TG) binding to the reductase component before interaction with NADH. It seems that TgnA undergoes an allosteric transition upon trigonelline (TG) binding accounting for the positive cooperativity toward NADH oxidation. Its function is as follows. Involved in the degradation of the pyridine ring of trigonelline (TG; N-methylnicotinate) into succinate and methylamine as carbon and nitrogen sources, respectively. TgnA catalyzes the reduction of flavin (FMN or FAD) by NADH and supplies the reduced flavin to the oxygenase component TgnB. The protein is Flavin-dependent trigonelline monooxygenase, reductase component of Acinetobacter baylyi (strain ATCC 33305 / BD413 / ADP1).